A 228-amino-acid chain; its full sequence is PKHD-type hydroxylase XCV3086 (228 aa).

Residues 78–180 enclose the Fe2OG dioxygenase domain; sequence RIYPPLFNRY…RVACFFWTQS (103 aa). Fe cation is bound by residues H96, D98, and H161. R171 is a 2-oxoglutarate binding site.

The cofactor is Fe(2+). L-ascorbate serves as cofactor.

This chain is PKHD-type hydroxylase XCV3086, found in Xanthomonas euvesicatoria pv. vesicatoria (strain 85-10) (Xanthomonas campestris pv. vesicatoria).